Consider the following 167-residue polypeptide: Kininogen-1 (167 aa).

The first 23 residues, 1 to 23 (MRLWFCLSFFIILCLEHFPGTLA), serve as a signal peptide directing secretion.

This sequence belongs to the bradykinin-related peptide family. In terms of tissue distribution, expressed by the skin glands.

Its subcellular location is the secreted. In terms of biological role, vasodilator. Bradykinin produces in vitro relaxation of rat arterial smooth muscle and constriction of intestinal smooth muscle. May target bradykinin receptors (BDKRB). The protein is Kininogen-1 of Bombina orientalis (Oriental fire-bellied toad).